Here is a 211-residue protein sequence, read N- to C-terminus: Uracil phosphoribosyltransferase (211 aa).

5-phospho-alpha-D-ribose 1-diphosphate contacts are provided by residues Arg-79, Arg-104, and Asp-131 to Ser-139. Uracil is bound by residues Ile-196 and Gly-201–Ala-203. Asp-202 is a 5-phospho-alpha-D-ribose 1-diphosphate binding site.

It belongs to the UPRTase family. It depends on Mg(2+) as a cofactor.

It carries out the reaction UMP + diphosphate = 5-phospho-alpha-D-ribose 1-diphosphate + uracil. The protein operates within pyrimidine metabolism; UMP biosynthesis via salvage pathway; UMP from uracil: step 1/1. With respect to regulation, allosterically activated by GTP. Catalyzes the conversion of uracil and 5-phospho-alpha-D-ribose 1-diphosphate (PRPP) to UMP and diphosphate. The protein is Uracil phosphoribosyltransferase of Limosilactobacillus reuteri (strain DSM 20016) (Lactobacillus reuteri).